The primary structure comprises 250 residues: Probable replication-associated protein repA2 (250 aa).

It belongs to the IncFII RepA family.

In terms of biological role, this protein is essential for plasmid replication; it is involved in copy control functions. In Buchnera aphidicola subsp. Acyrthosiphon pisum (strain APS) (Acyrthosiphon pisum symbiotic bacterium), this protein is Probable replication-associated protein repA2 (repA2).